Reading from the N-terminus, the 215-residue chain is Ubiquitin-conjugating enzyme E2 S (215 aa).

Residues 9–155 (DVIKRVVKEL…AKLFTSIHAS (147 aa)) form the UBC core domain. The active-site Glycyl thioester intermediate is Cys93. The tract at residues 159–215 (IDSNNNNENSTTTPTTTTTATTPSTNTASISSPVKKKTETTNSTTTKVQPKKSLKRL) is disordered. Residues 161-190 (SNNNNENSTTTPTTTTTATTPSTNTASISS) show a composition bias toward low complexity.

The protein belongs to the ubiquitin-conjugating enzyme family.

It carries out the reaction S-ubiquitinyl-[E1 ubiquitin-activating enzyme]-L-cysteine + [E2 ubiquitin-conjugating enzyme]-L-cysteine = [E1 ubiquitin-activating enzyme]-L-cysteine + S-ubiquitinyl-[E2 ubiquitin-conjugating enzyme]-L-cysteine.. It functions in the pathway protein modification; protein ubiquitination. Catalyzes the covalent attachment of ubiquitin to other proteins. Acts as an essential factor of the anaphase promoting complex/cyclosome (APC/C), a cell cycle-regulated ubiquitin ligase that controls progression through mitosis. Acts by specifically elongating polyubiquitin chains initiated by the E2 enzyme ubch10 on APC/C substrates, enhancing the degradation of APC/C substrates by the proteasome and promoting mitotic exit. The chain is Ubiquitin-conjugating enzyme E2 S (ube2s) from Dictyostelium discoideum (Social amoeba).